The sequence spans 823 residues: Leucine--tRNA ligase (823 aa).

Positions 41–51 (PYPSGTLHVGH) match the 'HIGH' region motif. A 'KMSKS' region motif is present at residues 580 to 584 (KMSKS). K583 provides a ligand contact to ATP.

It belongs to the class-I aminoacyl-tRNA synthetase family.

It is found in the cytoplasm. The enzyme catalyses tRNA(Leu) + L-leucine + ATP = L-leucyl-tRNA(Leu) + AMP + diphosphate. In Thermosipho melanesiensis (strain DSM 12029 / CIP 104789 / BI429), this protein is Leucine--tRNA ligase.